A 70-amino-acid polypeptide reads, in one-letter code: MKQGIHPDYHAVQVTCSCGNTFVTRSTYNGDHMTVDVCSNCHPFYTGKQKILDTGGRVARFEKRYGKKAK.

Cys-16, Cys-18, Cys-38, and Cys-41 together coordinate Zn(2+).

It belongs to the bacterial ribosomal protein bL31 family. Type A subfamily. As to quaternary structure, part of the 50S ribosomal subunit. Zn(2+) is required as a cofactor.

In terms of biological role, binds the 23S rRNA. The sequence is that of Large ribosomal subunit protein bL31 from Bifidobacterium adolescentis (strain ATCC 15703 / DSM 20083 / NCTC 11814 / E194a).